The primary structure comprises 295 residues: Acetyl-coenzyme A carboxylase carboxyl transferase subunit beta (295 aa).

Residues 1–20 form a disordered region; that stretch reads MSWLSKLMPSGIRTENTPAK. Positions 28–295 constitute a CoA carboxyltransferase N-terminal domain; it reads LWEKCSNCGS…QPHPQDADAA (268 aa). Zn(2+)-binding residues include cysteine 32, cysteine 35, cysteine 51, and cysteine 54. A C4-type zinc finger spans residues 32–54; it reads CSNCGSALYGPELEENLEVCPKC.

This sequence belongs to the AccD/PCCB family. In terms of assembly, acetyl-CoA carboxylase is a heterohexamer composed of biotin carboxyl carrier protein (AccB), biotin carboxylase (AccC) and two subunits each of ACCase subunit alpha (AccA) and ACCase subunit beta (AccD). The cofactor is Zn(2+).

The protein localises to the cytoplasm. It carries out the reaction N(6)-carboxybiotinyl-L-lysyl-[protein] + acetyl-CoA = N(6)-biotinyl-L-lysyl-[protein] + malonyl-CoA. It participates in lipid metabolism; malonyl-CoA biosynthesis; malonyl-CoA from acetyl-CoA: step 1/1. Its function is as follows. Component of the acetyl coenzyme A carboxylase (ACC) complex. Biotin carboxylase (BC) catalyzes the carboxylation of biotin on its carrier protein (BCCP) and then the CO(2) group is transferred by the transcarboxylase to acetyl-CoA to form malonyl-CoA. The protein is Acetyl-coenzyme A carboxylase carboxyl transferase subunit beta of Xanthomonas campestris pv. campestris (strain B100).